Consider the following 1990-residue polypeptide: Protein TANC2 (1990 aa).

2 disordered regions span residues 1–85 and 129–149; these read MFRN…SVDE and SPCS…PCST. Phosphoserine is present on residues S169, S238, S294, and S400. Residues 396 to 442 form a disordered region; sequence IASDSPHASPKHVDANRELPLTQPPSAHSSITSGSCPGTPEMRRRQE. Over residues 419–431 the composition is skewed to polar residues; that stretch reads PPSAHSSITSGSC. ANK repeat units follow at residues 846 to 878, 884 to 913, 917 to 946, 950 to 979, 990 to 1019, 1033 to 1062, 1066 to 1095, 1099 to 1128, 1132 to 1161, 1165 to 1194, and 1198 to 1227; these read EGLS…NINY, NNAP…NVDA, SGLT…KVDH, NGQC…TMAG, AIQQ…KDEE, WGET…AVAQ, RGAV…DVNM, QGRT…SIAL, EGLT…ATDH, NGRT…MIEH, and SGMR…KIGP. TPR repeat units lie at residues 1244–1277, 1291–1324, and 1325–1358; these read LSKL…FPRE, VSLL…KPKS, and YEAY…CPNN. 3 disordered regions span residues 1372-1401, 1430-1586, and 1692-1718; these read CRQM…EPQH, EARP…KMAQ, and LTKE…PQIG. Phosphoserine is present on residues S1442 and S1458. Positions 1469 to 1498 are enriched in polar residues; that stretch reads RSSSSVGSPTRQTYQSTSPALSPTHQNSHY. 2 positions are modified to phosphoserine: S1530 and S1545. Over residues 1553-1572 the composition is skewed to polar residues; it reads VYRSQSGSPVRYQQETSVSQ. Asymmetric dimethylarginine is present on residues R1563 and R1576. S1579 is modified (phosphoserine). The residue at position 1722 (S1722) is a Phosphoserine. A compositionally biased stretch (low complexity) spans 1783 to 1798; sequence SPSSNSISSTSNLTPT. Disordered regions lie at residues 1783 to 1803 and 1821 to 1843; these read SPSS…RPSS and DELS…SRTT. Phosphoserine occurs at positions 1824 and 1827. A glycan (N-linked (GlcNAc...) asparagine) is linked at N1928. The tract at residues 1968 to 1990 is disordered; that stretch reads SRDSRQGQTSPIKPKRPFVESNV.

The protein belongs to the TANC family. As to quaternary structure, interacts with KIF1A; the interaction decreases in presence of calcium.

The protein localises to the cell projection. Its subcellular location is the dendritic spine. Scaffolding protein in the dendritic spines which acts as immobile postsynaptic posts able to recruit KIF1A-driven dense core vesicles to dendritic spines. This chain is Protein TANC2 (TANC2), found in Homo sapiens (Human).